The primary structure comprises 489 residues: Dipeptide and tripeptide permease B (489 aa).

Topologically, residues 1–27 are cytoplasmic; that stretch reads MNTTAPTGLLQQPRPFFMIFFVELWER. A helical transmembrane segment spans residues 28 to 48; sequence FGYYGVQGILAVFFVKQLGFS. Over 49–52 the chain is Periplasmic; it reads QEQA. Residues 53–73 form a helical membrane-spanning segment; it reads FITFGAFAALVYGLISIGGYV. The Cytoplasmic portion of the chain corresponds to 74–82; it reads GDHLLGTKR. The chain crosses the membrane as a helical span at residues 83–103; it reads TLVLGAIVLAIGYFMTGMSLL. The Periplasmic portion of the chain corresponds to 104–106; sequence NPD. Residues 107–127 traverse the membrane as a helical segment; sequence LIFIALGTIAVGNGLFKANPA. Topologically, residues 128–146 are cytoplasmic; it reads SLLSKCYQPKDPRLDGAFT. Residues 147-167 traverse the membrane as a helical segment; sequence LFYMSINIGSLLSLSLAPVIA. The Periplasmic portion of the chain corresponds to 168–172; that stretch reads DKFGY. Residues 173–193 form a helical membrane-spanning segment; it reads AVTYNLCGAGLIVALLVYFAC. Topologically, residues 194–214 are cytoplasmic; the sequence is RGMVKNIGSEPDHKPLRFRNL. A helical transmembrane segment spans residues 215 to 235; the sequence is LLVLLGTVVMIFLCAWLMHNV. Residue K236 is a topological domain, periplasmic. A helical membrane pass occupies residues 237 to 257; it reads IANLVLIVLSIVVTIFFFREA. Topologically, residues 258-267 are cytoplasmic; the sequence is FRLDKTGRNK. Residues 268–288 form a helical membrane-spanning segment; it reads MFVAFILMIEAVLFYILYAQM. At 289–315 the chain is on the periplasmic side; it reads PTSLNFFAINNVHHEILGFAINPVSFQ. Residues 316–338 traverse the membrane as a helical segment; the sequence is ALNPFWVVVASPVLAAIYTRLGS. The Cytoplasmic portion of the chain corresponds to 339 to 348; that stretch reads KGKDLTMPMK. The helical transmembrane segment at 349–369 threads the bilayer; it reads FTLGMFLCALGFLTAAAGMWF. Topologically, residues 370–379 are periplasmic; the sequence is ADAQGLTSPW. Residues 380–400 traverse the membrane as a helical segment; sequence FIVLVYLFQSLGELLISALGL. Residues 401–410 are Cytoplasmic-facing; the sequence is AMVAALVPQH. The helical transmembrane segment at 411–431 threads the bilayer; the sequence is LMGFILGMWFLTQAAAFLLGG. Topologically, residues 432-454 are periplasmic; that stretch reads YVATFTAVPENITDPLQTLPIYT. The chain crosses the membrane as a helical span at residues 455 to 475; that stretch reads GVFSKIGLVTLAVTVVMAIMV. Over 476-489 the chain is Cytoplasmic; that stretch reads PWLNRMINTPGTEQ.

This sequence belongs to the major facilitator superfamily. Proton-dependent oligopeptide transporter (POT/PTR) (TC 2.A.17) family. DtpB subfamily.

The protein resides in the cell inner membrane. Functionally, proton-dependent permease that transports di- and tripeptides. In Salmonella typhimurium (strain LT2 / SGSC1412 / ATCC 700720), this protein is Dipeptide and tripeptide permease B.